The sequence spans 341 residues: Solute carrier family 25 member 43 (341 aa).

Solcar repeat units lie at residues 11-101 (TGSQ…MDDL), 105-185 (SQWS…LLVY), and 200-298 (SHLQ…LYQN). Helical transmembrane passes span 16–36 (LLCA…LELA), 68–88 (LWKG…VQLA), 110–130 (IVTG…TDLI), 166–186 (GVSL…LVYM), 205–225 (FANV…FDTV), and 262–282 (VLGL…YFGV).

This sequence belongs to the mitochondrial carrier (TC 2.A.29) family.

It localises to the mitochondrion inner membrane. The protein is Solute carrier family 25 member 43 (Slc25a43) of Mus musculus (Mouse).